A 536-amino-acid chain; its full sequence is 2-isopropylmalate synthase (536 aa).

The Pyruvate carboxyltransferase domain occupies 8 to 273 (VLIFDTTLRD…FFGRDPESPT (266 aa)). Mn(2+) contacts are provided by Asp17, His208, His210, and Asn244. Positions 408 to 536 (QLQLVQVSCG…PQHDLIKANL (129 aa)) are regulatory domain.

Belongs to the alpha-IPM synthase/homocitrate synthase family. LeuA type 1 subfamily. As to quaternary structure, homodimer. The cofactor is Mn(2+).

Its subcellular location is the cytoplasm. The enzyme catalyses 3-methyl-2-oxobutanoate + acetyl-CoA + H2O = (2S)-2-isopropylmalate + CoA + H(+). Its pathway is amino-acid biosynthesis; L-leucine biosynthesis; L-leucine from 3-methyl-2-oxobutanoate: step 1/4. Catalyzes the condensation of the acetyl group of acetyl-CoA with 3-methyl-2-oxobutanoate (2-ketoisovalerate) to form 3-carboxy-3-hydroxy-4-methylpentanoate (2-isopropylmalate). This chain is 2-isopropylmalate synthase, found in Prochlorococcus marinus (strain MIT 9211).